The primary structure comprises 147 residues: Hemoglobin anodic subunit beta (147 aa).

The region spanning 2-147 (EWTDGERTAI…VTSALARQYH (146 aa)) is the Globin domain. His63 and His92 together coordinate heme b.

This sequence belongs to the globin family. Heterotetramer of two alpha chains and two beta chains. As to expression, red blood cells.

In terms of biological role, involved in oxygen transport from gills to the various peripheral tissues. This chain is Hemoglobin anodic subunit beta, found in Gymnothorax unicolor (Brown moray).